We begin with the raw amino-acid sequence, 215 residues long: Soluble inorganic pyrophosphatase (215 aa).

Residues 1-21 (MSQEDSTSAAAAQQPTSRPAP) show a composition bias toward low complexity. The segment at 1–24 (MSQEDSTSAAAAQQPTSRPAPKLN) is disordered. Positions 103, 108, and 140 each coordinate Mg(2+).

This sequence belongs to the PPase family. Mg(2+) is required as a cofactor. In terms of tissue distribution, expressed in metabolically active tissue such as root, shoot, embryo and aleurone.

It localises to the cytoplasm. The enzyme catalyses diphosphate + H2O = 2 phosphate + H(+). In terms of biological role, may play a role in germination. This is Soluble inorganic pyrophosphatase (IPP) from Hordeum vulgare subsp. vulgare (Domesticated barley).